A 172-amino-acid chain; its full sequence is Shikimate kinase (172 aa).

14 to 19 (GAGKST) is a binding site for ATP. Mg(2+) is bound at residue S18. Substrate-binding residues include D36, R60, and G82. ATP is bound at residue R120. Residue R139 participates in substrate binding. Q156 is a binding site for ATP.

Belongs to the shikimate kinase family. As to quaternary structure, monomer. Mg(2+) is required as a cofactor.

The protein resides in the cytoplasm. The catalysed reaction is shikimate + ATP = 3-phosphoshikimate + ADP + H(+). Its pathway is metabolic intermediate biosynthesis; chorismate biosynthesis; chorismate from D-erythrose 4-phosphate and phosphoenolpyruvate: step 5/7. Functionally, catalyzes the specific phosphorylation of the 3-hydroxyl group of shikimic acid using ATP as a cosubstrate. The chain is Shikimate kinase from Aliivibrio salmonicida (strain LFI1238) (Vibrio salmonicida (strain LFI1238)).